The sequence spans 312 residues: MAALCNNLRAKLVSWQPVGLFHTGVRLLAADKDLLVKLRKKTGYSFMNCKKALEQCANDFKQAETWLHQQAQKEGWDKASKLQGRKTKEGLVGLLQDGSTSVMVEVNCETDFVARNSKFQQLVQQVAVSTLRHCQSHPENTSSYVKGFLCGDELLQLKADESLKDQLALAIGKLGENMIMKRAAWVKTPSDIFVGSYMHGILMADLPSLTNMTFGKYGALVICKDSDGNLKSNISEIGRRLGQHVVGMNPLLVGSLEDESGGETETKMLAQPFLLEPSLTVGQYLQPRGINVLDFIRFECGEEAESTESTPT.

The protein belongs to the EF-Ts family.

It localises to the mitochondrion. In terms of biological role, associates with the EF-Tu.GDP complex and induces the exchange of GDP to GTP. It remains bound to the aminoacyl-tRNA.EF-Tu.GTP complex up to the GTP hydrolysis stage on the ribosome. This is Elongation factor Ts, mitochondrial (tsfm) from Xenopus laevis (African clawed frog).